Reading from the N-terminus, the 108-residue chain is MDQFECINVADAHQKLQEKEAVLVDIRDPQSFAMGHATQAFHLTNDTLGAFMRDNDFDTPVMVMCYHGNSSKGAAQYLLQQGYDVVYSIDGGFEAWQRQFPAEVAYGA.

Residues 17–105 form the Rhodanese domain; it reads QEKEAVLVDI…WQRQFPAEVA (89 aa). The Cysteine persulfide intermediate role is filled by C65.

Belongs to the GlpE family.

The protein resides in the cytoplasm. The catalysed reaction is thiosulfate + hydrogen cyanide = thiocyanate + sulfite + 2 H(+). It catalyses the reaction thiosulfate + [thioredoxin]-dithiol = [thioredoxin]-disulfide + hydrogen sulfide + sulfite + 2 H(+). Transferase that catalyzes the transfer of sulfur from thiosulfate to thiophilic acceptors such as cyanide or dithiols. May function in a CysM-independent thiosulfate assimilation pathway by catalyzing the conversion of thiosulfate to sulfite, which can then be used for L-cysteine biosynthesis. This is Thiosulfate sulfurtransferase GlpE from Escherichia coli O45:K1 (strain S88 / ExPEC).